Here is a 130-residue protein sequence, read N- to C-terminus: Flagellar assembly factor FliW (130 aa).

The protein belongs to the FliW family. As to quaternary structure, interacts with translational regulator CsrA and flagellin(s).

It is found in the cytoplasm. Its function is as follows. Acts as an anti-CsrA protein, binds CsrA and prevents it from repressing translation of its target genes, one of which is flagellin. Binds to flagellin and participates in the assembly of the flagellum. The protein is Flagellar assembly factor FliW of Clostridioides difficile (strain 630) (Peptoclostridium difficile).